Consider the following 425-residue polypeptide: Monoacylglycerol lipase ABHD2 (425 aa).

At methionine 1–glutamate 9 the chain is on the cytoplasmic side. Residues leucine 10 to valine 30 traverse the membrane as a helical; Signal-anchor for type II membrane protein segment. The Extracellular segment spans residues arginine 31–glutamate 425. Positions methionine 128–glycine 382 constitute an AB hydrolase-1 domain. The N-linked (GlcNAc...) asparagine glycan is linked to asparagine 136. Serine 207 (nucleophile) is an active-site residue. Residues aspartate 345 and histidine 376 each act as charge relay system in the active site. Asparagine 410 is a glycosylation site (N-linked (GlcNAc...) asparagine).

It belongs to the AB hydrolase superfamily. AB hydrolase 4 family.

Its subcellular location is the cell membrane. It carries out the reaction Hydrolyzes glycerol monoesters of long-chain fatty acids.. It catalyses the reaction an acetyl ester + H2O = an aliphatic alcohol + acetate + H(+). The enzyme catalyses a triacylglycerol + H2O = a diacylglycerol + a fatty acid + H(+). The catalysed reaction is 2-(5Z,8Z,11Z,14Z-eicosatetraenoyl)-glycerol + H2O = glycerol + (5Z,8Z,11Z,14Z)-eicosatetraenoate + H(+). It carries out the reaction a butanoate ester + H2O = an aliphatic alcohol + butanoate + H(+). It catalyses the reaction hexadecanoate ester + H2O = an aliphatic alcohol + hexadecanoate + H(+). Its activity is regulated as follows. Acylglycerol lipase activity is activated upon binding to progesterone. In terms of biological role, progesterone-dependent acylglycerol lipase that catalyzes hydrolysis of endocannabinoid arachidonoylglycerol (AG) from cell membrane. Acts as a progesterone receptor: progesterone-binding activates the acylglycerol lipase activity, mediating degradation of 1-arachidonoylglycerol (1AG) and 2-arachidonoylglycerol (2AG) to glycerol and arachidonic acid (AA). Also displays an ester hydrolase activity against acetyl ester, butanoate ester and hexadecanoate ester. Plays a key role in sperm capacitation in response to progesterone by mediating degradation of 2AG, an inhibitor of the sperm calcium channel CatSper, leading to calcium influx via CatSper and sperm activation. May also play a role in smooth muscle cells migration. This is Monoacylglycerol lipase ABHD2 (ABHD2) from Macaca fascicularis (Crab-eating macaque).